The sequence spans 181 residues: CDP-archaeol synthase (181 aa).

The next 5 helical transmembrane spans lie at 7 to 27, 55 to 75, 88 to 108, 126 to 146, and 147 to 167; these read VVWALWAMLPAYIPNNAAVLA, LIGTAAGTALALGLTQVTPSV, LRAGLGLAFGAMLGDIGASFL, LDFVVGALLCAFVAAPSWFTE, and TFTLPVLVVVVVATPVLHVVT.

Belongs to the CDP-archaeol synthase family. Mg(2+) is required as a cofactor.

Its subcellular location is the cell membrane. It carries out the reaction 2,3-bis-O-(geranylgeranyl)-sn-glycerol 1-phosphate + CTP + H(+) = CDP-2,3-bis-O-(geranylgeranyl)-sn-glycerol + diphosphate. It functions in the pathway membrane lipid metabolism; glycerophospholipid metabolism. In terms of biological role, catalyzes the formation of CDP-2,3-bis-(O-geranylgeranyl)-sn-glycerol (CDP-archaeol) from 2,3-bis-(O-geranylgeranyl)-sn-glycerol 1-phosphate (DGGGP) and CTP. This reaction is the third ether-bond-formation step in the biosynthesis of archaeal membrane lipids. The sequence is that of CDP-archaeol synthase from Haloarcula marismortui (strain ATCC 43049 / DSM 3752 / JCM 8966 / VKM B-1809) (Halobacterium marismortui).